The chain runs to 584 residues: Cytochrome c oxidase subunit 1 (584 aa).

The tract at residues 1-25 (MTAVAPRVDGHVAPQRPEPTGHARK) is disordered. Residues 43 to 63 (IMYIIMSFSFFFLGGLMALLI) form a helical membrane-spanning segment. Histidine 87 is a binding site for Fe(II)-heme a. The next 6 helical transmembrane spans lie at 90–110 (VMLL…VLPL), 122–142 (LNAF…TGFL), 171–191 (MWIV…INML), 214–234 (IFVV…AALG), 259–279 (LFWF…FGIV), and 292–312 (FGYV…MAVW). The Cu cation site is built by histidine 265 and tyrosine 269. Positions 265–269 (HPEVY) form a cross-link, 1'-histidyl-3'-tyrosine (His-Tyr). Cu cation is bound by residues histidine 314 and histidine 315. The next 2 helical transmembrane spans lie at 316–336 (MFVT…LISV) and 360–380 (MIWS…GIML). Heme a3 is bound at residue histidine 398. A run of 3 helical transmembrane segments spans residues 399 to 419 (FHYT…YFWF), 434 to 454 (IHFW…HWVG), and 477 to 497 (ISTV…WNVF). Histidine 400 serves as a coordination point for Fe(II)-heme a. The interval 564–584 (HDDINAPELGTAPALASDSSR) is disordered.

Associates with subunits II, III and IV to form cytochrome c oxidase. The 4 subunit cytochrome c oxidase forms a supercomplex with the menaquinol-cytochrome c reductase complex (cytochrome bc1). Cu(2+) serves as cofactor. Requires heme as cofactor.

Its subcellular location is the cell membrane. The catalysed reaction is 4 Fe(II)-[cytochrome c] + O2 + 8 H(+)(in) = 4 Fe(III)-[cytochrome c] + 2 H2O + 4 H(+)(out). It functions in the pathway energy metabolism; oxidative phosphorylation. In terms of biological role, cytochrome c oxidase is the component of the respiratory chain that catalyzes the reduction of oxygen to water. Subunits 1-3 form the functional core of the enzyme complex. CO I is the catalytic subunit of the enzyme. Electrons originating in cytochrome c are transferred via the copper A center of subunit 2 and heme A of subunit 1 to the bimetallic center formed by heme A3 and copper B. The protein is Cytochrome c oxidase subunit 1 (ctaD) of Corynebacterium glutamicum (strain ATCC 13032 / DSM 20300 / JCM 1318 / BCRC 11384 / CCUG 27702 / LMG 3730 / NBRC 12168 / NCIMB 10025 / NRRL B-2784 / 534).